A 56-amino-acid polypeptide reads, in one-letter code: Small ribosomal subunit protein uS14 (56 aa).

Residues Cys21, Cys24, Cys39, and Cys42 each coordinate Zn(2+).

Belongs to the universal ribosomal protein uS14 family. Zinc-binding uS14 subfamily. As to quaternary structure, part of the 30S ribosomal subunit. The cofactor is Zn(2+).

In terms of biological role, binds 16S rRNA, required for the assembly of 30S particles. The polypeptide is Small ribosomal subunit protein uS14 (Methanospirillum hungatei JF-1 (strain ATCC 27890 / DSM 864 / NBRC 100397 / JF-1)).